A 306-amino-acid chain; its full sequence is Lipoyl synthase (306 aa).

The [4Fe-4S] cluster site is built by Cys52, Cys57, Cys63, Cys78, Cys82, Cys85, and Ser289. One can recognise a Radical SAM core domain in the interval 64–278; it reads WNRKTATYML…KETAYKIGFK (215 aa).

This sequence belongs to the radical SAM superfamily. Lipoyl synthase family. [4Fe-4S] cluster serves as cofactor.

It is found in the cytoplasm. The catalysed reaction is [[Fe-S] cluster scaffold protein carrying a second [4Fe-4S](2+) cluster] + N(6)-octanoyl-L-lysyl-[protein] + 2 oxidized [2Fe-2S]-[ferredoxin] + 2 S-adenosyl-L-methionine + 4 H(+) = [[Fe-S] cluster scaffold protein] + N(6)-[(R)-dihydrolipoyl]-L-lysyl-[protein] + 4 Fe(3+) + 2 hydrogen sulfide + 2 5'-deoxyadenosine + 2 L-methionine + 2 reduced [2Fe-2S]-[ferredoxin]. It functions in the pathway protein modification; protein lipoylation via endogenous pathway; protein N(6)-(lipoyl)lysine from octanoyl-[acyl-carrier-protein]: step 2/2. Functionally, catalyzes the radical-mediated insertion of two sulfur atoms into the C-6 and C-8 positions of the octanoyl moiety bound to the lipoyl domains of lipoate-dependent enzymes, thereby converting the octanoylated domains into lipoylated derivatives. This is Lipoyl synthase from Leptospira biflexa serovar Patoc (strain Patoc 1 / Ames).